The sequence spans 484 residues: Poly(A) RNA polymerase GLD2 (484 aa).

Phosphoserine occurs at positions 62 and 69. The Nuclear localization signal signature appears at 76–92 (KRISDEKAFRLDGKRQR). Ser-95 bears the Phosphoserine mark. Mg(2+) is bound by residues Asp-213 and Asp-215. Residues 386–440 (SLGDLLLGFLKYYATEFDWNTQMISVREAKAIPRPDDMEWRNKYICVEEPFDGTN) enclose the PAP-associated domain.

It belongs to the DNA polymerase type-B-like family. GLD2 subfamily. As to quaternary structure, interacts with CPEB1, CPEB2, CPSF1 and PABPC1. Interacts with QKI isoform QKI7; promoting recruitment to miRNA miR-122 and miR-122 stabilization. Requires Mg(2+) as cofactor. It depends on Mn(2+) as a cofactor.

The protein resides in the cytoplasm. It is found in the nucleus. The enzyme catalyses RNA(n) + ATP = RNA(n)-3'-adenine ribonucleotide + diphosphate. Functionally, cytoplasmic poly(A) RNA polymerase that adds successive AMP monomers to the 3'-end of specific RNAs, forming a poly(A) tail. In contrast to the canonical nuclear poly(A) RNA polymerase, it only adds poly(A) to selected cytoplasmic mRNAs. Does not play a role in replication-dependent histone mRNA degradation. Adds a single nucleotide to the 3' end of specific miRNAs, monoadenylation stabilizes and prolongs the activity of some but not all miRNAs. This chain is Poly(A) RNA polymerase GLD2, found in Rattus norvegicus (Rat).